The following is a 481-amino-acid chain: Histidine--tRNA ligase, cytoplasmic (481 aa).

The interval 1–48 (MSEPVVDNVTNKVEKMEVKEKTSAPPKEKKEKKSNKVQLKTPKGTQDY) is disordered. The segment covering 12-31 (KVEKMEVKEKTSAPPKEKKE) has biased composition (basic and acidic residues).

It belongs to the class-II aminoacyl-tRNA synthetase family.

The protein resides in the cytoplasm. The catalysed reaction is tRNA(His) + L-histidine + ATP = L-histidyl-tRNA(His) + AMP + diphosphate + H(+). This chain is Histidine--tRNA ligase, cytoplasmic (hisS), found in Dictyostelium discoideum (Social amoeba).